Reading from the N-terminus, the 76-residue chain is Omega-conotoxin-like TxMKLT1-0211 (76 aa).

Residues 1 to 22 form the signal peptide; that stretch reads MKLTCMMIVAVLFLTAWTFVTA. Positions 23–52 are excised as a propeptide; it reads VPHSSNALENLYLKAHHEMNNPEDSELNKR. Cystine bridges form between cysteine 53/cysteine 67, cysteine 60/cysteine 71, and cysteine 66/cysteine 75.

It belongs to the conotoxin O1 superfamily. In terms of tissue distribution, expressed by the venom duct.

It localises to the secreted. In terms of biological role, omega-conotoxins act at presynaptic membranes, they bind and block voltage-gated calcium channels (Cav). This chain is Omega-conotoxin-like TxMKLT1-0211, found in Conus textile (Cloth-of-gold cone).